Here is a 571-residue protein sequence, read N- to C-terminus: 15-cis-phytoene desaturase, chloroplastic/chromoplastic (571 aa).

A chloroplast and chromoplast-targeting transit peptide spans 1–96 (MDTGCLSSMN…FRNSERPSKP (96 aa)). Residues Ala-107, 126 to 127 (EA), Lys-134, 151 to 152 (HI), and Tyr-157 each bind FAD. Arg-292 serves as a coordination point for substrate. 2 residues coordinate FAD: Ile-334 and Asp-523. Residue Ala-531 participates in substrate binding. Met-533 is a binding site for FAD.

This sequence belongs to the carotenoid/retinoid oxidoreductase family. Homotetramer. Requires FAD as cofactor.

The protein localises to the plastid. It localises to the chloroplast. The protein resides in the chromoplast. It is found in the membrane. It carries out the reaction 2 a plastoquinone + 15-cis-phytoene = 9,9',15-tri-cis-zeta-carotene + 2 a plastoquinol. Its pathway is carotenoid biosynthesis; lycopene biosynthesis. Converts phytoene into zeta-carotene via the intermediary of phytofluene by the symmetrical introduction of two double bonds at the C-11 and C-11' positions of phytoene with a concomitant isomerization of two neighboring double bonds at the C9 and C9' positions from trans to cis. This is 15-cis-phytoene desaturase, chloroplastic/chromoplastic (PDS1) from Zea mays (Maize).